The primary structure comprises 422 residues: Serine hydroxymethyltransferase (422 aa).

Residues leucine 118 and 122-124 (GHL) each bind (6S)-5,6,7,8-tetrahydrofolate. Lysine 227 carries the N6-(pyridoxal phosphate)lysine modification. (6S)-5,6,7,8-tetrahydrofolate-binding positions include glutamate 243 and 351 to 353 (SPF).

This sequence belongs to the SHMT family. Homodimer. The cofactor is pyridoxal 5'-phosphate.

The protein resides in the cytoplasm. The enzyme catalyses (6R)-5,10-methylene-5,6,7,8-tetrahydrofolate + glycine + H2O = (6S)-5,6,7,8-tetrahydrofolate + L-serine. It functions in the pathway one-carbon metabolism; tetrahydrofolate interconversion. The protein operates within amino-acid biosynthesis; glycine biosynthesis; glycine from L-serine: step 1/1. Its function is as follows. Catalyzes the reversible interconversion of serine and glycine with tetrahydrofolate (THF) serving as the one-carbon carrier. This reaction serves as the major source of one-carbon groups required for the biosynthesis of purines, thymidylate, methionine, and other important biomolecules. Also exhibits THF-independent aldolase activity toward beta-hydroxyamino acids, producing glycine and aldehydes, via a retro-aldol mechanism. The sequence is that of Serine hydroxymethyltransferase from Kosmotoga olearia (strain ATCC BAA-1733 / DSM 21960 / TBF 19.5.1).